Here is a 422-residue protein sequence, read N- to C-terminus: Large ribosomal subunit protein uL4 (422 aa).

Alanine 2 is subject to N-acetylalanine. Lysine 14 is modified (N6-acetyllysine). Arginine 97 is subject to Omega-N-methylarginine. Lysine 106 carries the N6-acetyllysine modification. Residue lysine 239 forms a Glycyl lysine isopeptide (Lys-Gly) (interchain with G-Cter in SUMO2) linkage. N6-acetyllysine is present on lysine 259. The residue at position 266 (threonine 266) is a Phosphothreonine. Phosphoserine occurs at positions 290 and 295. At arginine 300 the chain carries Citrulline. Lysine 327 is covalently cross-linked (Glycyl lysine isopeptide (Lys-Gly) (interchain with G-Cter in SUMO2)). 2 positions are modified to N6-acetyllysine: lysine 333 and lysine 353. The tract at residues 359–422 is disordered; it reads EAKSDQKGVQ…PTSEEKKAAA (64 aa). N6-acetyllysine; alternate is present on lysine 361. Lysine 361 participates in a covalent cross-link: Glycyl lysine isopeptide (Lys-Gly) (interchain with G-Cter in SUMO1); alternate. Serine 362 bears the Phosphoserine mark. Composition is skewed to basic and acidic residues over residues 376–385 and 402–422; these read NKEKKAVGDK and PAAEKKPTEKKPTSEEKKAAA.

This sequence belongs to the universal ribosomal protein uL4 family. Component of the large ribosomal subunit. May bind IPO9 with low affinity. Interacts with RBM3. Citrullinated by PADI4.

It localises to the cytoplasm. Functionally, component of the large ribosomal subunit. The ribosome is a large ribonucleoprotein complex responsible for the synthesis of proteins in the cell. The sequence is that of Large ribosomal subunit protein uL4 (RPL4) from Bos taurus (Bovine).